The chain runs to 117 residues: Large ribosomal subunit protein bL20 (117 aa).

The protein belongs to the bacterial ribosomal protein bL20 family.

In terms of biological role, binds directly to 23S ribosomal RNA and is necessary for the in vitro assembly process of the 50S ribosomal subunit. It is not involved in the protein synthesizing functions of that subunit. This is Large ribosomal subunit protein bL20 from Limosilactobacillus reuteri (strain DSM 20016) (Lactobacillus reuteri).